The chain runs to 270 residues: Maximins-S type D (270 aa).

The signal sequence occupies residues 1 to 18; that stretch reads MNFNYFILVLFFITSGHA. 2 propeptides span residues 19 to 35 and 52 to 65; these read KSETREVHQEAENHIKR and SAEEQNLAEHLVTR. Asparagine 83 carries the post-translational modification Asparagine amide. Residues 87-100 constitute a propeptide that is removed on maturation; the sequence is SAEEQDLAEDLVTR. Lysine 118 bears the Lysine amide mark. The propeptide occupies 122 to 135; that stretch reads SAEDQDLAEDLVTR. The residue at position 153 (asparagine 153) is an Asparagine amide. Positions 157–170 are excised as a propeptide; that stretch reads SAEEQDLAEHLVTR. Asparagine 188 carries the asparagine amide modification. Residues 192-205 constitute a propeptide that is removed on maturation; sequence SAEEQDLVEDLVTR. The residue at position 223 (lysine 223) is a Lysine amide. The propeptide occupies 227 to 240; the sequence is SAEEQDLAEDLVTR. Lysine amide is present on lysine 258. Residues 262–270 constitute a propeptide that is removed on maturation; the sequence is SAEQEKDMK.

This sequence belongs to the maximin-S family. In terms of tissue distribution, expressed by the skin dorsal glands.

The protein localises to the secreted. Maximin-S1 has no antimicrobial activity. Has no hemolytic activity. In terms of biological role, maximin-S2 has an activity against mycoplasma but has no activity against common Gram-positive and Gram-negative bacteria nor fungi. Has no hemolytic activity. Its function is as follows. Maximin-S3 has an activity against mycoplasma but has no activity against common Gram-positive and Gram-negative bacteria nor fungi. Has no hemolytic activity. Functionally, maximin-S4 has an activity against mycoplasma but has no activity against common Gram-positive and Gram-negative bacteria nor fungi. Has no hemolytic activity. Maximin-S5 has an activity against mycoplasma but has no activity against common Gram-positive and Gram-negative bacteria nor fungi. Has no hemolytic activity. The chain is Maximins-S type D from Bombina maxima (Giant fire-bellied toad).